Here is a 507-residue protein sequence, read N- to C-terminus: tRNA (guanine(6)-N(2))-methyltransferase THUMP3 (507 aa).

The region spanning 165 to 285 is the THUMP domain; it reads KIDQRNVKKE…DNEVIVGIAL (121 aa).

This sequence belongs to the methyltransferase superfamily. Part of the heterodimeric THUMPD3-TRM112 methyltransferase complex; this complex forms an active tRNA methyltransferase, where TRMT112 acts as an activator of the catalytic subunit THUMPD3.

The protein localises to the cytoplasm. It catalyses the reaction guanosine(6) in tRNA + S-adenosyl-L-methionine = N(2)-methylguanosine(6) in tRNA + S-adenosyl-L-homocysteine + H(+). It carries out the reaction guanosine(7) in tRNA + S-adenosyl-L-methionine = N(2)-methylguanosine(7) in tRNA + S-adenosyl-L-homocysteine + H(+). In terms of biological role, catalytic subunit of the THUMPD3-TRM112 methyltransferase complex, that specifically mediates the S-adenosyl-L-methionine-dependent N(2)-methylation of guanosine nucleotide at position 6 (m2G6) in tRNAs. This is one of the major tRNA (guanine-N(2))-methyltransferases. Also catalyzes the S-adenosyl-L-methionine-dependent N(2)-methylation of guanosine nucleotide at position 7 of tRNA(Trp). This Homo sapiens (Human) protein is tRNA (guanine(6)-N(2))-methyltransferase THUMP3.